The sequence spans 215 residues: Deoxyadenosine kinase (215 aa).

9-17 (GPIGAGKSS) serves as a coordination point for ATP. The substrate site is built by Glu-33, Tyr-45, and Asn-56. Asp-79 (proton acceptor) is an active-site residue. Arg-80, Asp-85, and Glu-150 together coordinate substrate.

This sequence belongs to the DCK/DGK family. Heterodimer of a deoxyadenosine (DAK) and a deoxyguanosine kinase (DGK).

The enzyme catalyses 2'-deoxyadenosine + ATP = dAMP + ADP + H(+). Functionally, DGK/DAK plays an essential role in generating the deoxyribonucleotide precursors, dGTP and dATP, for DNA metabolism. This chain is Deoxyadenosine kinase, found in Lactobacillus acidophilus (strain ATCC 700396 / NCK56 / N2 / NCFM).